The following is a 433-amino-acid chain: Elongation factor 1-alpha (433 aa).

Positions 5-220 (KPHINVVFIG…ALDMLKPPQL (216 aa)) constitute a tr-type G domain. Positions 14 to 21 (GHVDHGKS) are G1. 14 to 21 (GHVDHGKS) is a binding site for GTP. Position 21 (S21) interacts with Mg(2+). Positions 70–74 (GVTID) are G2. Positions 91 to 94 (DAPG) are G3. GTP-binding positions include 91–95 (DAPGH) and 146–149 (NKMD). Residues 146–149 (NKMD) are G4. Positions 186-188 (ASF) are G5.

This sequence belongs to the TRAFAC class translation factor GTPase superfamily. Classic translation factor GTPase family. EF-Tu/EF-1A subfamily.

The protein resides in the cytoplasm. The catalysed reaction is GTP + H2O = GDP + phosphate + H(+). In terms of biological role, GTP hydrolase that promotes the GTP-dependent binding of aminoacyl-tRNA to the A-site of ribosomes during protein biosynthesis. This is Elongation factor 1-alpha from Nanoarchaeum equitans (strain Kin4-M).